We begin with the raw amino-acid sequence, 54 residues long: Large ribosomal subunit protein bL33 (54 aa).

It belongs to the bacterial ribosomal protein bL33 family.

This Corynebacterium efficiens (strain DSM 44549 / YS-314 / AJ 12310 / JCM 11189 / NBRC 100395) protein is Large ribosomal subunit protein bL33.